The primary structure comprises 780 residues: Potassium/sodium hyperpolarization-activated cyclic nucleotide-gated channel 3 (780 aa).

The tract at residues 1–47 (MEEEARPAVGDGEAATPARETPPAAPAQARAASGGVPESAPEPKRRQ) is disordered. Residues 1 to 96 (MEEEARPAVG…PYSDFRFYWD (96 aa)) lie on the Cytoplasmic side of the membrane. The span at 13–32 (EAATPARETPPAAPAQARAA) shows a compositional bias: low complexity. Residues 45 to 90 (RRQLGTLLQPTVNKFSLRVFGSHKAVEIEQERVKSAGAWIIHPYSD) are involved in subunit assembly. The helical transmembrane segment at 97–117 (LIMLLLMVGNLIVLPVGITFF) threads the bilayer. Residues 118-123 (KEENSP) are Extracellular-facing. A helical membrane pass occupies residues 124–144 (PWIVFNVLSDTFFLLDLVLNF). Topologically, residues 145–170 (RTGIVVEEGAEILLAPRAIRTRYLRT) are cytoplasmic. Residues 171-191 (WFLVDLISSIPVDYIFLVVEL) traverse the membrane as a helical segment. Topologically, residues 192–200 (EPRLDAEVY) are extracellular. A helical; Voltage-sensor transmembrane segment spans residues 201 to 221 (KTARALRIVRFTKILSLLRLL). Over 222–252 (RLSRLIRYMHQWEEIFHMTYDLASAVVRIFN) the chain is Cytoplasmic. The chain crosses the membrane as a helical span at residues 253–273 (LIGMMLLLCHWDGCLQFLVPM). Over 274–296 (LQDFPSDCWVSMNRMVNHSWGRQ) the chain is Extracellular. A glycan (N-linked (GlcNAc...) asparagine) is linked at Asn-290. Positions 297-318 (YSHALFKAMSHMLCIGYGQQAP) form an intramembrane region, pore-forming. Residues 319–328 (VGMPDVWLTM) lie on the Extracellular side of the membrane. A helical transmembrane segment spans residues 329–349 (LSMIVGATCYAMFIGHATALI). Residues 350 to 780 (QSLDSSRRQY…PRGPQISANM (431 aa)) lie on the Cytoplasmic side of the membrane. Positions 353 to 780 (DSSRRQYQEK…PRGPQISANM (428 aa)) are interaction with KCTD3. 7 residues coordinate 3',5'-cyclic AMP: Gly-491, Glu-492, Cys-494, Arg-501, Thr-502, Arg-542, and Arg-545. The segment at 549-569 (KNSILQRKRSEPSPGSSSGGV) is disordered. Phosphoserine is present on Ser-634. The span at 687–698 (ASLSRTGRSQVS) shows a compositional bias: polar residues. Positions 687-780 (ASLSRTGRSQ…PRGPQISANM (94 aa)) are disordered.

It belongs to the potassium channel HCN family. Homotetramer. The potassium channel is composed of a homo- or heterotetrameric complex of pore-forming subunits. Interacts with HCN1. Interacts with KCTD3; this interaction increases cell surface expression and current density of this channel. Interacts with PEX5L.

The protein localises to the cell membrane. The enzyme catalyses K(+)(in) = K(+)(out). The catalysed reaction is Na(+)(in) = Na(+)(out). With respect to regulation, inhibited by Cs(1+) and ivabradine. Unlike HCN2 and HCN4, HCN3 is insensitive to cyclic nucleotides, such as cAMP or cGMP. This lack of sensitivity of HCN3, despite harboring a functional cyclic nucleotide-binding domain (CNBD), may be explained by its shorter C-terminal sequence, which may alter the normal autoinhibition of the channel. Phosphatidylinositol-4,5-bisphosphate (PIP(2)) shifts HCN3 activation to more depolarized potentials and accelerated activation kinetics. Its function is as follows. Hyperpolarization-activated ion channel that are permeable to sodium and potassium ions, with an about 3:1 preference for potassium ions. Contributes to the native pacemaker currents in heart (If) and in neurons (Ih). In particular, plays a pivotal role in maintaining excitability and promoting rhythmic burst firing within hypothalamic nuclei. Exerts a significant influence on the configuration of the cardiac action potential waveform. Does not appear to play a prominent role in the processing of acute, neuropathic, or inflammatory pain. This is Potassium/sodium hyperpolarization-activated cyclic nucleotide-gated channel 3 (Hcn3) from Rattus norvegicus (Rat).